The sequence spans 122 residues: Hexon-interlacing protein (122 aa).

Residues 72 to 106 (VTELNESIDELQQKMTELEKRLKIMEEKIEEIKLA) are a coiled coil.

The protein belongs to the adenoviridae hexon-interlacing protein family. In terms of assembly, homotrimer. Interacts with hexon protein; this interaction tethers the hexons together. Self-interacts with adjacent proteins. Interacts with kinesin light chain KLC1; this interaction leads to capsid disruption at the nuclear pore complex during virus entry into host cell.

It is found in the virion. It localises to the host nucleus. In terms of biological role, structural component of the virion that acts as a cement protein on the capsid exterior and forms triskelion structures consisting of three molecules that stabilize three hexon trimers at the center of each icosahedral facet and fixes the peripentonal hexons. Dispensable for assembly. During virus entry, recruits the anterograde motor kinesin-1 to the capsid docked at the nuclear pore complex thereby subjecting the docked capsid to a pulling force. The resulting tension leads to capsid disruption, dispersion of capsid fragments toward cell periphery and eventually viral DNA entry into the host nucleus. This chain is Hexon-interlacing protein, found in Tupaiidae (tree shrews).